The chain runs to 354 residues: Guanine nucleotide-binding protein G(i) subunit alpha (354 aa).

G2 carries the N-myristoyl glycine lipid modification. C3 carries S-palmitoyl cysteine lipidation. A G-alpha domain is found at 32–354 (REVKLLLLGA…KNNLKDCGLF (323 aa)). Residues 35-48 (KLLLLGAGESGKST) are G1 motif. Residues 40 to 47 (GAGESGKS), 175 to 181 (LRTRVKT), 200 to 204 (DVGGQ), 269 to 272 (NKKD), and A326 contribute to the GTP site. S47 and T181 together coordinate Mg(2+). The interval 173 to 181 (DVLRTRVKT) is G2 motif. The tract at residues 196-205 (FKMFDVGGQR) is G3 motif. A G4 motif region spans residues 265–272 (ILFLNKKD). Residues 324 to 329 (TCATDT) are G5 motif.

This sequence belongs to the G-alpha family. G(i/o/t/z) subfamily. In terms of assembly, g proteins are composed of 3 units; alpha, beta and gamma. The alpha chain contains the guanine nucleotide binding site.

In terms of biological role, guanine nucleotide-binding proteins (G proteins) are involved as modulators or transducers in various transmembrane signaling systems. The G(i) proteins are involved in hormonal regulation of adenylate cyclase: they inhibit the cyclase in response to beta-adrenergic stimuli. The polypeptide is Guanine nucleotide-binding protein G(i) subunit alpha (Lymnaea stagnalis (Great pond snail)).